The sequence spans 174 residues: Shikimate kinase (174 aa).

Position 14-19 (14-19 (GAGKST)) interacts with ATP. S18 serves as a coordination point for Mg(2+). Substrate contacts are provided by D36, R60, and G82. Position 120 (R120) interacts with ATP. Residue R141 coordinates substrate. R158 serves as a coordination point for ATP.

The protein belongs to the shikimate kinase family. Monomer. The cofactor is Mg(2+).

The protein localises to the cytoplasm. The catalysed reaction is shikimate + ATP = 3-phosphoshikimate + ADP + H(+). The protein operates within metabolic intermediate biosynthesis; chorismate biosynthesis; chorismate from D-erythrose 4-phosphate and phosphoenolpyruvate: step 5/7. In terms of biological role, catalyzes the specific phosphorylation of the 3-hydroxyl group of shikimic acid using ATP as a cosubstrate. This is Shikimate kinase from Buchnera aphidicola subsp. Baizongia pistaciae (strain Bp).